The chain runs to 331 residues: Vitamin B12 import system permease protein BtuC (331 aa).

The next 7 helical transmembrane spans lie at 21 to 43 (LALL…ERWI), 63 to 85 (PRTL…MQAV), 90 to 112 (LAEP…TVLL), 116 to 138 (LLPV…FLLL), 151 to 173 (LLIG…YFST), 193 to 210 (WRHG…LWLS), and 239 to 261 (VLVL…IAFI).

The protein belongs to the binding-protein-dependent transport system permease family. FecCD subfamily. As to quaternary structure, the complex is composed of two ATP-binding proteins (BtuD), two transmembrane proteins (BtuC) and a solute-binding protein (BtuF).

Its subcellular location is the cell inner membrane. In terms of biological role, part of the ABC transporter complex BtuCDF involved in vitamin B12 import. Involved in the translocation of the substrate across the membrane. The protein is Vitamin B12 import system permease protein BtuC of Pectobacterium atrosepticum (strain SCRI 1043 / ATCC BAA-672) (Erwinia carotovora subsp. atroseptica).